The sequence spans 147 residues: Large ribosomal subunit protein uL13 (147 aa).

It belongs to the universal ribosomal protein uL13 family. As to quaternary structure, part of the 50S ribosomal subunit.

Functionally, this protein is one of the early assembly proteins of the 50S ribosomal subunit, although it is not seen to bind rRNA by itself. It is important during the early stages of 50S assembly. The sequence is that of Large ribosomal subunit protein uL13 from Latilactobacillus sakei subsp. sakei (strain 23K) (Lactobacillus sakei subsp. sakei).